Reading from the N-terminus, the 203-residue chain is dITP/XTP pyrophosphatase (203 aa).

8–13 (TANKGK) is a substrate binding site. Mg(2+)-binding residues include E41 and D70. The active-site Proton acceptor is D70. Residues S71, 153–156 (FGYD), K176, and 181–182 (HR) each bind substrate.

The protein belongs to the HAM1 NTPase family. As to quaternary structure, homodimer. The cofactor is Mg(2+).

It catalyses the reaction XTP + H2O = XMP + diphosphate + H(+). The enzyme catalyses dITP + H2O = dIMP + diphosphate + H(+). The catalysed reaction is ITP + H2O = IMP + diphosphate + H(+). Functionally, pyrophosphatase that catalyzes the hydrolysis of nucleoside triphosphates to their monophosphate derivatives, with a high preference for the non-canonical purine nucleotides XTP (xanthosine triphosphate), dITP (deoxyinosine triphosphate) and ITP. Seems to function as a house-cleaning enzyme that removes non-canonical purine nucleotides from the nucleotide pool, thus preventing their incorporation into DNA/RNA and avoiding chromosomal lesions. The chain is dITP/XTP pyrophosphatase from Listeria monocytogenes serotype 4b (strain F2365).